The following is a 2303-amino-acid chain: Genome polyprotein (2303 aa).

Residues 3-14 (CKHGYPDVCPIC) fold into a zinc finger. Positions 30 to 46 (DGEWYPTDLLCVDLDDD) are acidic. Residues 60–73 (MDWTDVPLIRDIVM) are theilo. Positions 74-93 (EPQGNSSSSDKSNSQSSGNE) are disordered. The N-myristoyl glycine; by host moiety is linked to residue glycine 77. Positions 78–92 (NSSSSDKSNSQSSGN) are enriched in low complexity. Cysteine 501 and cysteine 503 are oxidised to a cystine. The interval 1041–1047 (YYRQRLI) is host EIF4E binding. The SF3 helicase domain maps to 1283–1448 (IPLASLCEKF…CKTPAGMLDV (166 aa)). 1312–1319 (GAAGQGKS) contacts ATP. The residue at position 1608 (tyrosine 1608) is an O-(5'-phospho-RNA)-tyrosine. Residues 1636-1829 (NPVMDFELFC…AATIITKELI (194 aa)) enclose the Peptidase C3 domain. Residues histidine 1680, aspartate 1714, and cysteine 1793 each act as for protease 3C activity in the active site. One can recognise a RdRp catalytic domain in the interval 2071–2189 (NYVYDVDYSN…GTNYQIDFNL (119 aa)). Active-site for RdRp activity residues include aspartate 2077 and aspartate 2175.

Belongs to the picornaviruses polyprotein family. As to quaternary structure, interacts with host EIF4E. Interacts with the leader protein. Interacts with host RAN; the complex L-RAN recruits cellular kinases responsible for the L-induced nucleocytoplasmic trafficking inhibition. The complex L-RAN can further bind to the host exportins XPO1/CRM1 and CSE1L/CAS. Interacts with the protein 2A. Interacts with host RNASEL; this interaction prevents RNASEL activation by its substrate 2'-5' oligoadenylates. Phosphorylated. Post-translationally, specific enzymatic cleavages by the viral protease in vivo yield a variety of precursors and mature proteins. The polyprotein seems to be cotranslationally cleaved at the 2A/2B junction by a ribosomal skip from one codon to the next without formation of a peptide bond. This process would release the P1-2A peptide from the translational complex. In terms of processing, during virion maturation, immature virions are rendered infectious following cleavage of VP0 into VP4 and VP2. This maturation seems to be an autocatalytic event triggered by the presence of RNA in the capsid and is followed by a conformational change of the particle. Uridylylated by the polymerase and is covalently linked to the 5'-end of genomic RNA. This uridylylated form acts as a nucleotide-peptide primer for the polymerase. Post-translationally, myristoylation is required during RNA encapsidation and formation of the mature virus particle.

The protein localises to the virion. It localises to the host cytoplasm. The protein resides in the host nucleus. It is found in the host nucleolus. Its subcellular location is the host cytoplasmic vesicle membrane. It carries out the reaction RNA(n) + a ribonucleoside 5'-triphosphate = RNA(n+1) + diphosphate. It catalyses the reaction ATP + H2O = ADP + phosphate + H(+). The enzyme catalyses Selective cleavage of Gln-|-Gly bond in the poliovirus polyprotein. In other picornavirus reactions Glu may be substituted for Gln, and Ser or Thr for Gly.. Forms a complex with host RAN and probably binds to exportins carrying activated MAPK in order to mediate the hyperphosphorylation of host Phe/Gly containing nuclear pore proteins (Nups) resulting in cessation of active nucleocytoplasmic transport. Proteins with NLS signals fail to import, cellular mRNAs fail to export, and some proteins small enough for diffusion are not retained anymore (efflux). The resulting inhibition of cellular protein synthesis serves to ensure maximal viral gene expression and to evade host immune response. The leader protein also inhibits host interferon regulatory factor 3 (IRF3) dimerization, thereby blocking the transcriptional activation of IFN genes. Binds to host RNase L thereby preventing its activation by 2'-5' oligoadenylates in order to counteract the antiviral interferon-inducible OAS/RNase L pathway. Inhibits the integrated stress response (ISR) in the infected cell. Inhibits the host EIF2AK2/PKR by rendering this kinase unable to detect double-stranded RNA. Also impairs host stress granule formation probably by acting on a step downstream of EIF2AK2/PKR activation. Its function is as follows. Forms an icosahedral capsid of pseudo T=3 symmetry with capsid proteins VP2 and VP3. Together they form an icosahedral capsid composed of 60 copies of each VP1, VP2, and VP3, with a diameter of approximately 300 Angstroms. VP4 lies on the inner surface of the protein shell formed by VP1, VP2 and VP3. All the three latter proteins contain a beta-sheet structure called beta-barrel jelly roll. VP1 is situated at the 12 fivefold axes, whereas VP2 and VP3 are located at the quasi-sixfold axes. In terms of biological role, lies on the inner surface of the capsid shell. After binding to the host receptor, the capsid undergoes conformational changes. Capsid protein VP4 is released, capsid protein VP1 N-terminus is externalized, and together, they shape a pore in the host membrane through which the viral genome is translocated into the host cell cytoplasm. After genome has been released, the channel shrinks. Functionally, VP0 precursor is a component of immature procapsids. Involved in host translation shutoff by inhibiting cap-dependent mRNA translation. Nuclear localization is required for this function. The resulting inhibition of cellular protein synthesis serves to ensure maximal viral gene expression and to evade host immune response. Inhibits the phosphorylation of the leader protein. Its function is as follows. Affects membrane integrity and causes an increase in membrane permeability. In terms of biological role, associates with and induces structural rearrangements of intracellular membranes. It displays RNA-binding, nucleotide binding and NTPase activities. Functionally, serves as membrane anchor via its hydrophobic domain. Forms a primer, VPg-pU, which is utilized by the polymerase for the initiation of RNA chains. Its function is as follows. Cysteine protease that generates mature viral proteins from the precursor polyprotein. In addition to its proteolytic activity, it binds to viral RNA, and thus influences viral genome replication. RNA and substrate cooperatively bind to the protease. Cleaves host PABP1, this cleavage is important for viral replication. In terms of biological role, replicates the genomic and antigenomic RNAs by recognizing replications specific signals. Performs VPg uridylylation. This is Genome polyprotein from Mus musculus (Mouse).